Consider the following 329-residue polypeptide: Short-chain dehydrogenase/reductase prx4 (329 aa).

Residues Ser-58, Ile-60, and Asn-81 each coordinate NADP(+). N-linked (GlcNAc...) asparagine glycosylation is present at Asn-91. 6 residues coordinate NADP(+): Asp-98, Asn-121, Lys-161, Tyr-194, Lys-198, and Thr-229. The active-site Proton acceptor is Tyr-194. Lys-198 (lowers pKa of active site Tyr) is an active-site residue. Residues 238-258 form a helical membrane-spanning segment; it reads GPLMAAGLPVSSAHMVGLAVV.

This sequence belongs to the short-chain dehydrogenases/reductases (SDR) family.

The protein resides in the membrane. The protein operates within sesquiterpene biosynthesis. Short-chain dehydrogenase/reductase; part of the gene cluster that mediates the biosynthesis of PR-toxin, a bicyclic sesquiterpene belonging to the eremophilane class and acting as a mycotoxin. The first step of the pathway is catalyzed by the aristolochene synthase which performs the cyclization of trans,trans-farnesyl diphosphate (FPP) to the bicyclic sesquiterpene aristolochene. Following the formation of aristolochene, the non-oxygenated aristolochene is converted to the trioxygenated intermediate eremofortin B, via 7-epi-neopetasone. This conversion appears to involve three enzymes, a hydroxysterol oxidase-like enzyme, the quinone-oxidase prx3 that forms the quinone-type-structure in the bicyclic nucleus of aristolochene with the C8-oxo group and the C-3 hydroxyl group, and the P450 monooxygenase ORF6 that introduces the epoxide at the double bond between carbons 1 and 2. No monoxy or dioxy-intermediates have been reported to be released to the broth, so these three early oxidative reactions may be coupled together. Eremofortin B is further oxidized by another P450 monooxygenase, that introduces a second epoxide between carbons 7 and 11 prior to acetylation to eremofortin A by the acetyltransferase ORF8. The second epoxidation may be performed by a second P450 monooxygenase. After the acetylation step, eremofortin A is converted to eremofortin C and then to PR-toxin. First the conversion of eremofortin A to eremofortin C proceeds by oxidation of the side chain of the molecule at C-12 and is catalyzed by the short-chain oxidoreductase prx1. The cytochrome P450 monooxygenase ORF6 is probably also involved in this step. The primary alcohol formed at C-12 is finally oxidized by the short-chain alcohol dehydrogenase prx4 that forms PR-toxin. This chain is Short-chain dehydrogenase/reductase prx4, found in Penicillium roqueforti.